Here is a 422-residue protein sequence, read N- to C-terminus: Testin (422 aa).

The 108-residue stretch at 92–199 folds into the PET domain; it reads MILTNPVPAK…GDVKLPSEMD (108 aa). 2 disordered regions span residues 135 to 162 and 194 to 226; these read QPVAGSEGAQYRKKQLAKQLPAHDQDPS and LPSEMDVKPGDRSSLDGGDRGTTAEVGAVEDKS. Residues 194–212 are compositionally biased toward basic and acidic residues; sequence LPSEMDVKPGDRSSLDGGD. 3 consecutive LIM zinc-binding domains span residues 234–297, 299–359, and 362–422; these read YSCY…CDSE, PRCA…NHAV, and QGCH…MMMS.

Belongs to the prickle / espinas / testin family. Interacts via LIM domain 1 with ZYX. Interacts (via LIM domain 3) with ENAH and VASP. Interacts with ALKBH4, talin, actin, alpha-actinin, GRIP1 and PXN. Interacts (via LIM domain 2) with ACTL7A (via N-terminus). Heterodimer with ACTL7A; the heterodimer interacts with ENAH to form a heterotrimer.

It localises to the cytoplasm. Its subcellular location is the cell junction. The protein resides in the focal adhesion. Its function is as follows. Scaffold protein that may play a role in cell adhesion, cell spreading and in the reorganization of the actin cytoskeleton. Plays a role in the regulation of cell proliferation. May act as a tumor suppressor. The chain is Testin (TES) from Monodelphis domestica (Gray short-tailed opossum).